The following is a 1157-amino-acid chain: Cyclin-dependent kinase 12 (1157 aa).

Residues 15–540 (SDVSSEDFSD…RSPTSRDLKH (526 aa)) are disordered. The segment covering 18-32 (SSEDFSDQEAGDLDA) has biased composition (acidic residues). The segment covering 55–76 (GRLDAKPDKEGYDNYRSRRAED) has biased composition (basic and acidic residues). The segment covering 85-94 (SRQTSSSEAT) has biased composition (polar residues). Threonine 106 is subject to Phosphothreonine. Basic residues predominate over residues 134 to 162 (RQKRKKQKKEKHKHKSKKKSKKRKKKRAK). Over residues 163 to 176 (SYSSIDSMSDNDIN) the composition is skewed to low complexity. A Phosphothreonine modification is found at threonine 184. Residues 189–215 (PSKSNERTVSAAPSSFTPHNLKESSSP) show a composition bias toward polar residues. Serine 190 and serine 192 each carry phosphoserine. Threonine 217 is subject to Phosphothreonine. A compositionally biased stretch (polar residues) spans 224-255 (PNTNSNYYGESSLETANSALGSNLQVTVTNKQ). The segment covering 256–281 (SISNRLRSPPPSSRSSGNGPRFGNSP) has biased composition (low complexity). At serine 280 the chain carries Phosphoserine. The residue at position 283 (threonine 283) is a Phosphothreonine. 3 positions are modified to phosphoserine: serine 291, serine 301, and serine 314. Basic and acidic residues predominate over residues 315–332 (PHKEDVSAHHRSSHDHGY). Serine 353 is subject to Phosphoserine. A Phosphothreonine modification is found at threonine 365. Residues 392–403 (GKYERYSRDRYS) show a composition bias toward basic and acidic residues. Over residues 408-422 (RSPSVQHSRSRQSPS) the composition is skewed to low complexity. Positions 444-468 (TTVSSTPSHTTRTSKRASGTGTSGD) are enriched in polar residues. Positions 473-484 (SPRTSSRYMESS) are enriched in low complexity. Phosphoserine occurs at positions 487 and 492. Residues 495–508 (HHYHHRRSPRMRQR) show a composition bias toward basic residues. Residues 518-533 (PSSASSESSASRSRSP) are compositionally biased toward low complexity. Serine 553 is subject to Phosphoserine. Disordered stretches follow at residues 574 to 661 (ERQE…ADVP) and 675 to 782 (PFSA…QRPV). Polar residues predominate over residues 586–603 (GALTINDNSSSVDGNTPN). The segment covering 609–623 (SAPGSGTPAAASTTS) has biased composition (low complexity). Composition is skewed to polar residues over residues 644–656 (NKQNDSVVSNPAS) and 721–731 (VTSSGSANKSV). Phosphoserine is present on residues serine 730, serine 743, serine 747, and serine 755. The span at 746–760 (LSGDDDVIDSPEDFD) shows a compositional bias: acidic residues. In terms of domain architecture, Protein kinase spans 804–1098 (FEMIAQIGEG…AEDALRSPWL (295 aa)). ATP contacts are provided by residues 810 to 818 (IGEGTYGQV), lysine 833, and 891 to 896 (EYMDHD). Aspartate 936 (proton acceptor) is an active-site residue. Histidine 1118 contributes to the ATP binding site.

It belongs to the protein kinase superfamily. CMGC Ser/Thr protein kinase family. CDC2/CDKX subfamily. Interacts with cyclin CycK.

The protein localises to the nucleus. It localises to the chromosome. The enzyme catalyses [DNA-directed RNA polymerase] + ATP = phospho-[DNA-directed RNA polymerase] + ADP + H(+). It catalyses the reaction L-seryl-[protein] + ATP = O-phospho-L-seryl-[protein] + ADP + H(+). It carries out the reaction L-threonyl-[protein] + ATP = O-phospho-L-threonyl-[protein] + ADP + H(+). Its function is as follows. Cyclin-dependent kinase which displays CTD kinase activity: hyperphosphorylates the C-terminal heptapeptide repeat domain (CTD) of the largest RNA polymerase II subunit, thereby acting as a key regulator of transcription elongation. The sequence is that of Cyclin-dependent kinase 12 (Cdk12) from Drosophila melanogaster (Fruit fly).